Consider the following 412-residue polypeptide: ATP phosphoribosyltransferase regulatory subunit (412 aa).

It belongs to the class-II aminoacyl-tRNA synthetase family. HisZ subfamily. As to quaternary structure, heteromultimer composed of HisG and HisZ subunits.

The protein resides in the cytoplasm. The protein operates within amino-acid biosynthesis; L-histidine biosynthesis; L-histidine from 5-phospho-alpha-D-ribose 1-diphosphate: step 1/9. Its function is as follows. Required for the first step of histidine biosynthesis. May allow the feedback regulation of ATP phosphoribosyltransferase activity by histidine. This chain is ATP phosphoribosyltransferase regulatory subunit, found in Dehalococcoides mccartyi (strain ATCC BAA-2100 / JCM 16839 / KCTC 5957 / BAV1).